The following is a 182-amino-acid chain: Acireductone dioxygenase (182 aa).

His100, His102, Glu106, and His145 together coordinate Fe(2+). Residues His100, His102, Glu106, and His145 each contribute to the Ni(2+) site.

Belongs to the acireductone dioxygenase (ARD) family. In terms of assembly, monomer. It depends on Fe(2+) as a cofactor. Ni(2+) serves as cofactor.

It carries out the reaction 1,2-dihydroxy-5-(methylsulfanyl)pent-1-en-3-one + O2 = 3-(methylsulfanyl)propanoate + CO + formate + 2 H(+). The enzyme catalyses 1,2-dihydroxy-5-(methylsulfanyl)pent-1-en-3-one + O2 = 4-methylsulfanyl-2-oxobutanoate + formate + 2 H(+). It functions in the pathway amino-acid biosynthesis; L-methionine biosynthesis via salvage pathway; L-methionine from S-methyl-5-thio-alpha-D-ribose 1-phosphate: step 5/6. Its function is as follows. Catalyzes 2 different reactions between oxygen and the acireductone 1,2-dihydroxy-3-keto-5-methylthiopentene (DHK-MTPene) depending upon the metal bound in the active site. Fe-containing acireductone dioxygenase (Fe-ARD) produces formate and 2-keto-4-methylthiobutyrate (KMTB), the alpha-ketoacid precursor of methionine in the methionine recycle pathway. Ni-containing acireductone dioxygenase (Ni-ARD) produces methylthiopropionate, carbon monoxide and formate, and does not lie on the methionine recycle pathway. The protein is Acireductone dioxygenase of Nostoc sp. (strain PCC 7120 / SAG 25.82 / UTEX 2576).